The primary structure comprises 155 residues: 6,7-dimethyl-8-ribityllumazine synthase (155 aa).

5-amino-6-(D-ribitylamino)uracil-binding positions include phenylalanine 24, 58 to 60 (AFE), and 82 to 84 (AII). Position 87 to 88 (87 to 88 (ST)) interacts with (2S)-2-hydroxy-3-oxobutyl phosphate. Histidine 90 acts as the Proton donor in catalysis. Phenylalanine 115 contacts 5-amino-6-(D-ribitylamino)uracil. Position 129 (arginine 129) interacts with (2S)-2-hydroxy-3-oxobutyl phosphate.

It belongs to the DMRL synthase family.

It carries out the reaction (2S)-2-hydroxy-3-oxobutyl phosphate + 5-amino-6-(D-ribitylamino)uracil = 6,7-dimethyl-8-(1-D-ribityl)lumazine + phosphate + 2 H2O + H(+). The protein operates within cofactor biosynthesis; riboflavin biosynthesis; riboflavin from 2-hydroxy-3-oxobutyl phosphate and 5-amino-6-(D-ribitylamino)uracil: step 1/2. Functionally, catalyzes the formation of 6,7-dimethyl-8-ribityllumazine by condensation of 5-amino-6-(D-ribitylamino)uracil with 3,4-dihydroxy-2-butanone 4-phosphate. This is the penultimate step in the biosynthesis of riboflavin. This Chlorobium phaeobacteroides (strain BS1) protein is 6,7-dimethyl-8-ribityllumazine synthase.